Consider the following 84-residue polypeptide: Translational regulator CsrA (84 aa).

The protein belongs to the CsrA/RsmA family. As to quaternary structure, homodimer; the beta-strands of each monomer intercalate to form a hydrophobic core, while the alpha-helices form wings that extend away from the core.

It localises to the cytoplasm. Functionally, a translational regulator that binds mRNA to regulate translation initiation and/or mRNA stability. Usually binds in the 5'-UTR at or near the Shine-Dalgarno sequence preventing ribosome-binding, thus repressing translation. Its main target seems to be the major flagellin gene, while its function is anatagonized by FliW. The sequence is that of Translational regulator CsrA from Leptospira interrogans serogroup Icterohaemorrhagiae serovar Lai (strain 56601).